The following is a 208-amino-acid chain: Uracil phosphoribosyltransferase (208 aa).

Residues R78, R103, and 130-138 (DPMLATGVS) contribute to the 5-phospho-alpha-D-ribose 1-diphosphate site. Uracil contacts are provided by residues I193 and 198–200 (GDA). D199 contributes to the 5-phospho-alpha-D-ribose 1-diphosphate binding site.

The protein belongs to the UPRTase family. Requires Mg(2+) as cofactor.

The catalysed reaction is UMP + diphosphate = 5-phospho-alpha-D-ribose 1-diphosphate + uracil. The protein operates within pyrimidine metabolism; UMP biosynthesis via salvage pathway; UMP from uracil: step 1/1. Its activity is regulated as follows. Allosterically activated by GTP. Functionally, catalyzes the conversion of uracil and 5-phospho-alpha-D-ribose 1-diphosphate (PRPP) to UMP and diphosphate. This Thermosipho africanus (strain TCF52B) protein is Uracil phosphoribosyltransferase.